Here is a 955-residue protein sequence, read N- to C-terminus: MTAQAPLSVAPFLQTPACPSEAPGAVLPFSLNYSRYVQRLAQARAGWAERVQAAAAGPISVAWLSARFGELFEAAAAEPEQALKRALRLLRNEVFAALAERDLSGAATLDEVTGAMTDFAEFAVRAAIAVIGQELGALHGQPVGQSSGEVQELVVVGMGKLGGRELNVSSDIDLIFLYDEEGDTQGGPRPLSNHEYFTKLGRRLINALADVTEDGYVFRVDMRLRPNGDAGPLACSLGMLEEYFVVQGREWERYAWIKGRVITDPGSPHAARVIQQLERVTTPFVFRRYLDYGVIAAIRALHAQIRAEAAKRSNAANRQHGGHDSQVQAHAPNIKLGRGGIREIEFVAQVFQLIRGGQDFGLRIRPTLEVLRAAAERGLIGADAVARLTDAYRFLRQLEHRLQYVDDAQTHNLPGAPEDQLRIARMMGFADYAALVAQLERYQDEVAQQFEQTFSDKQDNQPPCAAIWHADLLDDERTESARAQLLELGYADADSVLERLRASRHSPRYRALSEVSRQRFDLLINRALDHAARQTDADVTIARFLDFFDAISRRSSYLSLLSEYPQAMARVAHTLHASRWAADYLTRHPQLLDELLDTEALSAAPDWQGFRERVRERLRAAGDHVEMQMDILRQEHHAETFRILLQDLQGMLTVEPISDRLSDLADAVLDLTLETVWQQVSTRHREVPRFAVVAYGRLGGKELGYASDLDLIFLYDDDDERAPEVYAAYARKLITWLTSHTAAGMLFDVDTRLRPNGAAGLMVTHFEAFRRYQMREGDNAAWVWEHQALTRARFCAGDPEIGARFEALRIAVLRQPREAGPLRDEIAAMRERVLEGHANPTPLFDLKHDRGGMVDIEFTVQFLVLLHSAAYAELTRNAGNIALLRMAGELGLIDAARAARVADAYRDFRARQHKLRLDGQSAARVPAGTCAHEAAHVRALWEQVFGSIDAASPTP.

An adenylyl removase region spans residues 1 to 458 (MTAQAPLSVA…QFEQTFSDKQ (458 aa)). The adenylyl transferase stretch occupies residues 464–955 (CAAIWHADLL…GSIDAASPTP (492 aa)).

It belongs to the GlnE family. The cofactor is Mg(2+).

It carries out the reaction [glutamine synthetase]-O(4)-(5'-adenylyl)-L-tyrosine + phosphate = [glutamine synthetase]-L-tyrosine + ADP. The enzyme catalyses [glutamine synthetase]-L-tyrosine + ATP = [glutamine synthetase]-O(4)-(5'-adenylyl)-L-tyrosine + diphosphate. Its function is as follows. Involved in the regulation of glutamine synthetase GlnA, a key enzyme in the process to assimilate ammonia. When cellular nitrogen levels are high, the C-terminal adenylyl transferase (AT) inactivates GlnA by covalent transfer of an adenylyl group from ATP to specific tyrosine residue of GlnA, thus reducing its activity. Conversely, when nitrogen levels are low, the N-terminal adenylyl removase (AR) activates GlnA by removing the adenylyl group by phosphorolysis, increasing its activity. The regulatory region of GlnE binds the signal transduction protein PII (GlnB) which indicates the nitrogen status of the cell. This is Bifunctional glutamine synthetase adenylyltransferase/adenylyl-removing enzyme from Ralstonia nicotianae (strain ATCC BAA-1114 / GMI1000) (Ralstonia solanacearum).